We begin with the raw amino-acid sequence, 374 residues long: C-X-C chemokine receptor type 5 (374 aa).

Topologically, residues 1–57 (MNSPISLDMGAITYNMDDLYKELAIYSNSTEIPLQDSIFCSTEEGPLLTSFKTIFMP) are extracellular. The N-linked (GlcNAc...) asparagine glycan is linked to asparagine 28. The helical transmembrane segment at 58-78 (VAYSLIFLLGMMGNILVLVIL) threads the bilayer. Over 79–90 (ERHRHTRSSTET) the chain is Cytoplasmic. The chain crosses the membrane as a helical span at residues 91–111 (FLFHLAVADLLLVFILPFAVA). Residues 112–126 (EGSVGWVLGTFLCKT) are Extracellular-facing. Cysteine 124 and cysteine 204 are disulfide-bonded. The chain crosses the membrane as a helical span at residues 127–147 (VIALHKINFYCSSLLLACIAV). The Cytoplasmic portion of the chain corresponds to 148 to 169 (DRYLAIVHAVHAYRRRRLLSIH). A helical membrane pass occupies residues 170–190 (ITCSTIWLAGFLFALPELLFA). Residues 191–221 (KVVQPHNNESLPQCIFSQENEAETRAWFASR) are Extracellular-facing. An N-linked (GlcNAc...) asparagine glycan is attached at asparagine 198. A helical transmembrane segment spans residues 222-242 (FLYHTGGFLLPMLVMAWCYVG). Residues 243–261 (VVHRLLQAQRRPQRQKAVR) are Cytoplasmic-facing. A helical transmembrane segment spans residues 262–282 (VAILVTSIFLLCWSPYHIVIF). Residues 283–306 (LDTLERLKAVNSSCELSGYLSVAI) lie on the Extracellular side of the membrane. A helical membrane pass occupies residues 307-327 (TLCEFLGLAHCCLNPMLYTFA). Residues 328 to 374 (GVKFRSDLSRLLTKLGCAGPASLCQLFPGWRKSSLSESENATSLTTF) lie on the Cytoplasmic side of the membrane.

The protein belongs to the G-protein coupled receptor 1 family. As to expression, expressed in neuronal and lymphatic tissue.

The protein resides in the cell membrane. In terms of biological role, cytokine receptor that binds to B-lymphocyte chemoattractant (BLC). Involved in B-cell migration into B-cell follicles of spleen and Peyer patches but not into those of mesenteric or peripheral lymph nodes. The protein is C-X-C chemokine receptor type 5 (Cxcr5) of Rattus norvegicus (Rat).